A 229-amino-acid chain; its full sequence is Uracil-DNA glycosylase (229 aa).

Catalysis depends on Asp-64, which acts as the Proton acceptor.

It belongs to the uracil-DNA glycosylase (UDG) superfamily. UNG family.

Its subcellular location is the cytoplasm. It carries out the reaction Hydrolyzes single-stranded DNA or mismatched double-stranded DNA and polynucleotides, releasing free uracil.. Excises uracil residues from the DNA which can arise as a result of misincorporation of dUMP residues by DNA polymerase or due to deamination of cytosine. The polypeptide is Uracil-DNA glycosylase (Escherichia coli (strain 55989 / EAEC)).